A 174-amino-acid polypeptide reads, in one-letter code: uncharacterized protein (174 aa).

Residues 1-31 (MCCVYRMNRPASGLTVVFCGKLSGKPGPKSA) form the signal peptide. The segment at 39–59 (KSGADDGGENPRFFSAGPRTE) is disordered.

This is an uncharacterized protein from Escherichia coli (strain K12).